The chain runs to 22 residues: Heliocin (22 aa).

The residue at position 1 (Q1) is a Pyrrolidone carboxylic acid. The interval 1–22 (QRFIHPTYRPPPQPRRPVIMRA) is disordered. T7 carries an O-linked (GalNAc...) threonine glycan.

As to quaternary structure, monomer. Hemolymph.

It is found in the secreted. In terms of biological role, has antibacterial activity, preferentially against Gram-negative bacteria. The sequence is that of Heliocin from Heliothis virescens (Tobacco budworm moth).